The chain runs to 469 residues: 3-isopropylmalate dehydratase large subunit (469 aa).

[4Fe-4S] cluster is bound by residues Cys-347, Cys-410, and Cys-413.

Belongs to the aconitase/IPM isomerase family. LeuC type 1 subfamily. As to quaternary structure, heterodimer of LeuC and LeuD. The cofactor is [4Fe-4S] cluster.

The catalysed reaction is (2R,3S)-3-isopropylmalate = (2S)-2-isopropylmalate. Its pathway is amino-acid biosynthesis; L-leucine biosynthesis; L-leucine from 3-methyl-2-oxobutanoate: step 2/4. Functionally, catalyzes the isomerization between 2-isopropylmalate and 3-isopropylmalate, via the formation of 2-isopropylmaleate. In Burkholderia mallei (strain NCTC 10247), this protein is 3-isopropylmalate dehydratase large subunit.